The chain runs to 136 residues: Large ribosomal subunit protein uL16 (136 aa).

Belongs to the universal ribosomal protein uL16 family. Part of the 50S ribosomal subunit.

In terms of biological role, binds 23S rRNA and is also seen to make contacts with the A and possibly P site tRNAs. The sequence is that of Large ribosomal subunit protein uL16 from Ruthia magnifica subsp. Calyptogena magnifica.